The sequence spans 234 residues: Coiled-coil domain-containing protein 194 (234 aa).

An N-terminal signal peptide occupies residues 1 to 42 (MAEPGPEPGRAWRVLALCGVAVFLAAAAAGGALVAWNLAASA). Disordered stretches follow at residues 44–67 (RGPR…PGVD) and 187–234 (VLEA…RARG). Residues 66–163 (VDDLRRRLAE…TRRLDEALRR (98 aa)) adopt a coiled-coil conformation. Positions 187–196 (VLEAEMSPQR) are enriched in low complexity. The segment covering 197 to 217 (RVPRPRPRSGSRPRPSPRSRS) has biased composition (basic residues).

The chain is Coiled-coil domain-containing protein 194 from Homo sapiens (Human).